A 248-amino-acid chain; its full sequence is 4-hydroxy-tetrahydrodipicolinate reductase (248 aa).

NAD(+) contacts are provided by residues 9–14, 77–79, and 104–107; these read GAKGRV, GTT, and APNF. The active-site Proton donor/acceptor is His-134. His-135 is a binding site for (S)-2,3,4,5-tetrahydrodipicolinate. Lys-138 acts as the Proton donor in catalysis. 144–145 serves as a coordination point for (S)-2,3,4,5-tetrahydrodipicolinate; it reads GT.

The protein belongs to the DapB family.

Its subcellular location is the cytoplasm. The enzyme catalyses (S)-2,3,4,5-tetrahydrodipicolinate + NAD(+) + H2O = (2S,4S)-4-hydroxy-2,3,4,5-tetrahydrodipicolinate + NADH + H(+). It catalyses the reaction (S)-2,3,4,5-tetrahydrodipicolinate + NADP(+) + H2O = (2S,4S)-4-hydroxy-2,3,4,5-tetrahydrodipicolinate + NADPH + H(+). Its pathway is amino-acid biosynthesis; L-lysine biosynthesis via DAP pathway; (S)-tetrahydrodipicolinate from L-aspartate: step 4/4. Functionally, catalyzes the conversion of 4-hydroxy-tetrahydrodipicolinate (HTPA) to tetrahydrodipicolinate. This is 4-hydroxy-tetrahydrodipicolinate reductase from Corynebacterium aurimucosum (strain ATCC 700975 / DSM 44827 / CIP 107346 / CN-1) (Corynebacterium nigricans).